Reading from the N-terminus, the 241-residue chain is Enterotoxin type H (241 aa).

An N-terminal signal peptide occupies residues 1-24 (MINKIKILFSFLALLLSFTSYAKA). An intrachain disulfide couples Cys106 to Cys116. Zn(2+) is bound by residues Asp191, His230, and Asp232.

The protein belongs to the staphylococcal/streptococcal toxin family. In terms of assembly, interacts with host MHC class II molecules composed of alpha/HLA-DRA and beta/HLA-DRB1 chains. Interacts with host TCR alpha-chain TRAV27. Requires Zn(2+) as cofactor.

Its subcellular location is the secreted. Staphylococcal enterotoxin that activates the host immune system by binding as unprocessed molecules to major histocompatibility (MHC) complex class II and T-cell receptor (TCR) molecules via their alpha domain, in particular TRAV27. In turn, this ternary complex activates a large number of T-lymphocytes initiating a systemic release of pro-inflammatory cytokines. Also causes the intoxication staphylococcal food poisoning syndrome. The illness characterized by high fever, hypotension, diarrhea, shock, and in some cases death. The chain is Enterotoxin type H (entH) from Staphylococcus aureus.